The following is a 199-amino-acid chain: Octanoyltransferase (199 aa).

One can recognise a BPL/LPL catalytic domain in the interval 27 to 199 (SNSCDELWLL…FVQYFLTQFK (173 aa)). Substrate-binding positions include 66-73 (RGGQVTYH), 133-135 (SIG), and 146-148 (GIA). The Acyl-thioester intermediate role is filled by cysteine 164.

The protein belongs to the LipB family.

Its subcellular location is the cytoplasm. It catalyses the reaction octanoyl-[ACP] + L-lysyl-[protein] = N(6)-octanoyl-L-lysyl-[protein] + holo-[ACP] + H(+). Its pathway is protein modification; protein lipoylation via endogenous pathway; protein N(6)-(lipoyl)lysine from octanoyl-[acyl-carrier-protein]: step 1/2. Functionally, catalyzes the transfer of endogenously produced octanoic acid from octanoyl-acyl-carrier-protein onto the lipoyl domains of lipoate-dependent enzymes. Lipoyl-ACP can also act as a substrate although octanoyl-ACP is likely to be the physiological substrate. This chain is Octanoyltransferase, found in Legionella pneumophila (strain Paris).